The primary structure comprises 324 residues: Delta-aminolevulinic acid dehydratase (324 aa).

Zn(2+)-binding residues include C118, C120, and C128. K195 serves as the catalytic Schiff-base intermediate with substrate. The 5-aminolevulinate site is built by R205 and R217. E233 is a binding site for Mg(2+). The active-site Schiff-base intermediate with substrate is the K248. The 5-aminolevulinate site is built by S274 and Y313.

It belongs to the ALAD family. Homooctamer. The cofactor is Zn(2+).

The enzyme catalyses 2 5-aminolevulinate = porphobilinogen + 2 H2O + H(+). It functions in the pathway porphyrin-containing compound metabolism; protoporphyrin-IX biosynthesis; coproporphyrinogen-III from 5-aminolevulinate: step 1/4. Catalyzes an early step in the biosynthesis of tetrapyrroles. Binds two molecules of 5-aminolevulinate per subunit, each at a distinct site, and catalyzes their condensation to form porphobilinogen. The sequence is that of Delta-aminolevulinic acid dehydratase (hemB) from Staphylococcus aureus (strain NCTC 8325 / PS 47).